Here is a 468-residue protein sequence, read N- to C-terminus: MSARTLFDKVWDLHTISVLPSGQTQLFIGLHLIHEVTSPQAFAMLKERGLRVMYPERTVATVDHIVPTENQQRPFQDSLAEEMMQALEVNTKAHNIRFHPIGSGNQGIVHVIAPEQGLTQPGMTIACGDSHTSTHGAFGAIAFGIGTSQVRDVLAAQSLSLNKLKVRKIEVNGDLAPGVYAKDVILHIIRKLGVKGGVGYAYEYAGSTFVAMNMEERMTVCNMSIEGGARCGYINPDEVTFAYLKGREFAPQGEDWDKAVQWWRSIASEPDAVYDDVVSFRAEDIEPTVTWGITPGQGIGISEPVPTLDSLNPDDQAIASEAYKYMQFQPGQPLKGTKVDVCFIGSCTNGRLSDLEEAAKVAKGHQVAAGVKAFVVPGSEQVKQQAEAAGLDQIFQAAGFEWREAGCSMCLAMNPDKLQGDQLSASSSNRNFKGRQGSASGRTLLMSPAMVAAAAITGQVADVREVLG.

Cys347, Cys407, and Cys410 together coordinate [4Fe-4S] cluster.

It belongs to the aconitase/IPM isomerase family. LeuC type 1 subfamily. Heterodimer of LeuC and LeuD. It depends on [4Fe-4S] cluster as a cofactor.

It carries out the reaction (2R,3S)-3-isopropylmalate = (2S)-2-isopropylmalate. The protein operates within amino-acid biosynthesis; L-leucine biosynthesis; L-leucine from 3-methyl-2-oxobutanoate: step 2/4. Its function is as follows. Catalyzes the isomerization between 2-isopropylmalate and 3-isopropylmalate, via the formation of 2-isopropylmaleate. The chain is 3-isopropylmalate dehydratase large subunit from Synechocystis sp. (strain ATCC 27184 / PCC 6803 / Kazusa).